An 881-amino-acid polypeptide reads, in one-letter code: Formin-like protein 10 (881 aa).

An N-terminal signal peptide occupies residues 1–24; sequence MAMKRVVFLLLLVAASALVKSSRG. Positions 194-223 are disordered; that stretch reads LTPSNSLNMEPPSPYYPSKSAHKHQGVAPP. The helical transmembrane segment at 236–256 threads the bilayer; it reads VVLIAVLPTAALSFLAAFLCF. The span at 333–346 shows a compositional bias: polar residues; sequence TLVTGGTQENNATS. 3 disordered regions span residues 333–427, 683–703, and 837–881; these read TLVT…EVNA, ENGR…ESLQ, and ASQK…DSND. A compositionally biased stretch (pro residues) spans 351-390; the sequence is LMPPPPPPPPPPPPPPPPPPPRPPPPPPPIKKGAPPPAPP. A compositionally biased stretch (low complexity) spans 400 to 424; that stretch reads LSPTESSRSEESSASELASESSETE. Residues 422–854 enclose the FH2 domain; it reads ETEVNAPRAK…KSQANGNSNN (433 aa). The span at 692-701 shows a compositional bias: polar residues; sequence STSDDNSNES. Positions 846 to 865 are enriched in low complexity; sequence SQANGNSNNPSSQSNPQEQQ. The segment covering 870-881 has biased composition (basic and acidic residues); the sequence is LDHHFDSSDSND.

Belongs to the formin-like family. Class-I subfamily.

It localises to the membrane. The chain is Formin-like protein 10 (FH10) from Oryza sativa subsp. japonica (Rice).